A 343-amino-acid polypeptide reads, in one-letter code: Phosphoribosylformylglycinamidine cyclo-ligase (343 aa).

The protein belongs to the AIR synthase family.

Its subcellular location is the cytoplasm. It catalyses the reaction 2-formamido-N(1)-(5-O-phospho-beta-D-ribosyl)acetamidine + ATP = 5-amino-1-(5-phospho-beta-D-ribosyl)imidazole + ADP + phosphate + H(+). The protein operates within purine metabolism; IMP biosynthesis via de novo pathway; 5-amino-1-(5-phospho-D-ribosyl)imidazole from N(2)-formyl-N(1)-(5-phospho-D-ribosyl)glycinamide: step 2/2. This chain is Phosphoribosylformylglycinamidine cyclo-ligase, found in Rippkaea orientalis (strain PCC 8801 / RF-1) (Cyanothece sp. (strain PCC 8801)).